We begin with the raw amino-acid sequence, 563 residues long: Grainyhead-like protein 1 homolog (563 aa).

Residues 194–428 (NNLGFQYVLE…ELDKPAALFI (235 aa)) form the Grh/CP2 DB domain. Interaction with DNA regions lie at residues 326–335 (TDFSTQKGVK) and 372–375 (RKLR). The tract at residues 377–405 (EDKRAQKRKVQEYTAGALPGGRKKSDGEY) is disordered.

This sequence belongs to the grh/CP2 family. Grainyhead subfamily.

It localises to the nucleus. Its function is as follows. Probable transcription factor. Binds a motif with the core sequence 5'-C[ACT][TG]G-3' in regulatory elements of target genes. Many putative target genes show oscillating expression levels, perhaps as a result of rhythmic variation in accumulation of grh-1. Plays a role in proper cuticle formation and/or barrier function and is required repetitively during development, for successful completion of each molt. Involved in modulating lifespan. Plays a role in defense response to bacteria. May act upstream of the p38 MAP kinase / pmk-1 pathway. May act downstream of the insulin/IGF-1 receptor signaling (IIS) pathway. The polypeptide is Grainyhead-like protein 1 homolog (Caenorhabditis elegans).